The primary structure comprises 95 residues: Acylphosphatase (95 aa).

Residues 5–93 (RAHLYIKGKV…GEFQDFRILP (89 aa)) enclose the Acylphosphatase-like domain. Active-site residues include R20 and N38.

Belongs to the acylphosphatase family.

The enzyme catalyses an acyl phosphate + H2O = a carboxylate + phosphate + H(+). In Pyrobaculum islandicum (strain DSM 4184 / JCM 9189 / GEO3), this protein is Acylphosphatase (acyP).